The sequence spans 100 residues: MIFMRKVVAEVSIIPLGKGASVSKYVKKAIEVFKKYDLKVETNAMGTVLEGDLDEILKAFKEAHSTVLNDVDRVVSSLKIDERKDKENTIERKLKAIGEL.

This sequence belongs to the UPF0045 family.

The chain is UPF0045 protein MJ1052 from Methanocaldococcus jannaschii (strain ATCC 43067 / DSM 2661 / JAL-1 / JCM 10045 / NBRC 100440) (Methanococcus jannaschii).